Here is a 262-residue protein sequence, read N- to C-terminus: Phosphatidylserine decarboxylase proenzyme (262 aa).

Residues Asp-86, His-142, and Ser-226 each act as charge relay system; for autoendoproteolytic cleavage activity in the active site. Ser-226 serves as the catalytic Schiff-base intermediate with substrate; via pyruvic acid; for decarboxylase activity. Residue Ser-226 is modified to Pyruvic acid (Ser); by autocatalysis.

This sequence belongs to the phosphatidylserine decarboxylase family. PSD-B subfamily. Prokaryotic type I sub-subfamily. As to quaternary structure, heterodimer of a large membrane-associated beta subunit and a small pyruvoyl-containing alpha subunit. It depends on pyruvate as a cofactor. In terms of processing, is synthesized initially as an inactive proenzyme. Formation of the active enzyme involves a self-maturation process in which the active site pyruvoyl group is generated from an internal serine residue via an autocatalytic post-translational modification. Two non-identical subunits are generated from the proenzyme in this reaction, and the pyruvate is formed at the N-terminus of the alpha chain, which is derived from the carboxyl end of the proenzyme. The autoendoproteolytic cleavage occurs by a canonical serine protease mechanism, in which the side chain hydroxyl group of the serine supplies its oxygen atom to form the C-terminus of the beta chain, while the remainder of the serine residue undergoes an oxidative deamination to produce ammonia and the pyruvoyl prosthetic group on the alpha chain. During this reaction, the Ser that is part of the protease active site of the proenzyme becomes the pyruvoyl prosthetic group, which constitutes an essential element of the active site of the mature decarboxylase.

It is found in the cell membrane. The catalysed reaction is a 1,2-diacyl-sn-glycero-3-phospho-L-serine + H(+) = a 1,2-diacyl-sn-glycero-3-phosphoethanolamine + CO2. Its pathway is phospholipid metabolism; phosphatidylethanolamine biosynthesis; phosphatidylethanolamine from CDP-diacylglycerol: step 2/2. Catalyzes the formation of phosphatidylethanolamine (PtdEtn) from phosphatidylserine (PtdSer). In Bacillus cereus (strain ZK / E33L), this protein is Phosphatidylserine decarboxylase proenzyme.